Consider the following 126-residue polypeptide: Small ribosomal subunit protein bS6 (126 aa).

The tract at residues 104–126 is disordered; sequence LARRDRGDRPERPREDFGAQAQA. Residues 105-120 are compositionally biased toward basic and acidic residues; it reads ARRDRGDRPERPREDF.

This sequence belongs to the bacterial ribosomal protein bS6 family.

Its function is as follows. Binds together with bS18 to 16S ribosomal RNA. In Caulobacter vibrioides (strain ATCC 19089 / CIP 103742 / CB 15) (Caulobacter crescentus), this protein is Small ribosomal subunit protein bS6.